The sequence spans 67 residues: ATP synthase protein 8 (67 aa).

A helical transmembrane segment spans residues 8–24 (TWFITITSMTITLFIMF). Residue Lys54 is modified to N6-acetyllysine; alternate. An N6-succinyllysine; alternate modification is found at Lys54. The residue at position 57 (Lys57) is an N6-acetyllysine.

It belongs to the ATPase protein 8 family. In terms of assembly, F-type ATPases have 2 components, CF(1) - the catalytic core - and CF(0) - the membrane proton channel. Component of an ATP synthase complex composed of ATP5PB, ATP5MC1, ATP5F1E, ATP5PD, ATP5ME, ATP5PF, ATP5MF, MT-ATP6, MT-ATP8, ATP5F1A, ATP5F1B, ATP5F1D, ATP5F1C, ATP5PO, ATP5MG, ATP5MK and ATP5MJ. Interacts with PRICKLE3.

The protein resides in the mitochondrion membrane. Mitochondrial membrane ATP synthase (F(1)F(0) ATP synthase or Complex V) produces ATP from ADP in the presence of a proton gradient across the membrane which is generated by electron transport complexes of the respiratory chain. F-type ATPases consist of two structural domains, F(1) - containing the extramembraneous catalytic core and F(0) - containing the membrane proton channel, linked together by a central stalk and a peripheral stalk. During catalysis, ATP synthesis in the catalytic domain of F(1) is coupled via a rotary mechanism of the central stalk subunits to proton translocation. Part of the complex F(0) domain. Minor subunit located with subunit a in the membrane. This is ATP synthase protein 8 (MT-ATP8) from Rhinoceros unicornis (Greater Indian rhinoceros).